A 423-amino-acid chain; its full sequence is Tubulin beta-2 chain (423 aa).

The GTP site is built by Glu-44, Ser-113, Gly-117, Thr-118, Gly-119, Asn-179, and Asn-201. Residue Glu-44 participates in Mg(2+) binding. The disordered stretch occupies residues 394–423; sequence VSEYQQYQDATAEEEGEYDEDEDDEGGDYA. Residues 404–423 are compositionally biased toward acidic residues; sequence TAEEEGEYDEDEDDEGGDYA.

It belongs to the tubulin family. Dimer of alpha and beta chains. A typical microtubule is a hollow water-filled tube with an outer diameter of 25 nm and an inner diameter of 15 nM. Alpha-beta heterodimers associate head-to-tail to form protofilaments running lengthwise along the microtubule wall with the beta-tubulin subunit facing the microtubule plus end conferring a structural polarity. Microtubules usually have 13 protofilaments but different protofilament numbers can be found in some organisms and specialized cells. Requires Mg(2+) as cofactor.

It is found in the cytoplasm. It localises to the cytoskeleton. In terms of biological role, tubulin is the major constituent of microtubules, a cylinder consisting of laterally associated linear protofilaments composed of alpha- and beta-tubulin heterodimers. Microtubules grow by the addition of GTP-tubulin dimers to the microtubule end, where a stabilizing cap forms. Below the cap, tubulin dimers are in GDP-bound state, owing to GTPase activity of alpha-tubulin. This chain is Tubulin beta-2 chain (TUBB2), found in Oomycete-like sp. (strain MacKay2000).